The primary structure comprises 366 residues: Protein sigma-NS (366 aa).

Residues 1–11 (MASSLRAAISK) form an important for ssRNA-binding and formation of complexes region.

This sequence belongs to the orthoreovirus sigma-NS protein family. In terms of assembly, homooligomer; in presence of RNA. Interacts with protein mu-NS; this interaction allows the localization of sigma-NS to the viral factories. Interacts with host G3BP1 (via C-terminus); this interaction induces the relocalization of G3BP1 and other SG proteins to the viral factories periphery.

The protein resides in the host cytoplasm. In terms of biological role, protein that binds to ssRNA and participates with protein mu-NS in forming the matrix of viral factories, which are large inclusions in the host cytoplasm where replication intermediates are assembled and viral RNA replication takes place. Plays a role in the inhibition of the integrated stress response (ISR) to escape from host cell translational shutoff. Participates in the disruption of stress granules (SG) through its association with host G3BP1 and mu-NS. The sequence is that of Protein sigma-NS (S3) from Mammalia (T2J).